Reading from the N-terminus, the 705-residue chain is Gamma-adducin (705 aa).

Polar residues predominate over residues 1 to 10 (MSSDTSQAVI). Positions 1–22 (MSSDTSQAVITTPPPPSMPHKE) are disordered. N-acetylserine is present on Ser-2. Phosphoserine occurs at positions 31, 42, 64, 402, 414, 423, 442, and 461. Disordered regions lie at residues 472-495 (EDPS…VPLN), 535-556 (PSTM…PFSH), 572-612 (KQQG…EENH), and 658-705 (EITI…KVEA). A Glycyl lysine isopeptide (Lys-Gly) (interchain with G-Cter in SUMO2) cross-link involves residue Lys-484. 7 positions are modified to phosphoserine: Ser-583, Ser-585, Ser-590, Ser-672, Ser-676, Ser-678, and Ser-680. Residues 590–605 (SVSQIQSQTQSPQSVP) are compositionally biased toward low complexity. The segment covering 681-705 (PSKKKKKFRTPSFLKKNKKKEKVEA) has biased composition (basic residues). Ser-682 bears the Phosphoserine; by PKC mark. The tract at residues 683–700 (KKKKKFRTPSFLKKNKKK) is interaction with calmodulin.

It belongs to the aldolase class II family. Adducin subfamily. In terms of assembly, heterodimer of an alpha and a gamma subunit. Sumoylated. Post-translationally, proteolytically cleaved by asparagine endopeptidase (AEP) into 2 fragments. Overexpression of the 1-357 fragment induces neuronal apoptosis, and overexpression of either 1-357 or 358-706 fragment increases the degeneration of dendritic spines. Overexpression of the 1-357 fragment impairs neurite outgrowth by downregulating the expression of Rac2, and induces synaptic dysfunction and cognitive impairments in tau P301S transgenic mice, a mouse model for Alzheimer disease (AD). Expressed in kidney, brain, spleen, liver and heart. As to expression, expressed in renal interlobular arteries, afferent/efferent arterioles, parietal glomerular epithelial cells and microvilli of the luminal surface of the proximal tubule (at protein level). Expressed in podocytes (at protein level) Expressed in renal cortex (at protein level). Expressed in primary vascular smooth muscle cells (VSMCs) of the kidney (at protein level). Expressed in tubular cells and glomeruli (at protein level).

The protein localises to the cytoplasm. It is found in the cytoskeleton. Its subcellular location is the cell membrane. Membrane-cytoskeleton-associated protein that promotes the assembly of the spectrin-actin network. Plays a role in actin filament capping. Binds to calmodulin. Involved in myogenic reactivity of the renal afferent arteriole (Af-art), renal interlobular arteries and middle cerebral artery (MCA) to increased perfusion pressure. Involved in regulation of potassium channels in the vascular smooth muscle cells (VSMCs) of the Af-art and MCA ex vivo. Involved in regulation of glomerular capillary pressure, glomerular filtration rate (GFR) and glomerular nephrin expression in response to hypertension. Involved in renal blood flow (RBF) autoregulation. Plays a role in podocyte structure and function. Regulates globular monomer actin (G-actin) and filamentous polymer actin (F-actin) ratios in the primary podocytes affecting actin cytoskeleton organization. Regulates expression of synaptopodin, RhoA, Rac1 and CDC42 in the renal cortex and the primary podocytes. Regulates expression of nephrin in the glomeruli and in the primary podocytes, expression of nephrin and podocinin in the renal cortex, and expression of focal adhesion proteins integrin alpha-3 and integrin beta-1 in the glomeruli. Involved in cell migration and cell adhesion of podocytes, and in podocyte foot process effacement. Regulates expression of profibrotics markers MMP2, MMP9, TGF beta-1, tubular tight junction protein E-cadherin, and mesenchymal markers vimentin and alpha-SMA. Promotes the growth of neurites. The protein is Gamma-adducin (Add3) of Rattus norvegicus (Rat).